Reading from the N-terminus, the 438-residue chain is Vasoactive intestinal polypeptide receptor 2 (438 aa).

An N-terminal signal peptide occupies residues 1 to 23; that stretch reads MRTLLPPALLTCWLLAPVNSIHP. Residues 24-124 lie on the Extracellular side of the membrane; sequence ECRFHLEIQE…EDESKITFYI (101 aa). 3 cysteine pairs are disulfide-bonded: cysteine 38–cysteine 61, cysteine 52–cysteine 93, and cysteine 75–cysteine 109. N-linked (GlcNAc...) asparagine glycans are attached at residues asparagine 58, asparagine 88, and asparagine 92. Residues 125–150 form a helical membrane-spanning segment; the sequence is LVKAIYTLGYSVSLMSLATGSIILCL. Residues 151 to 158 are Cytoplasmic-facing; that stretch reads FRKLHCTR. A helical membrane pass occupies residues 159–180; sequence NYIHLNLFLSFILRAISVLVKD. At 181–203 the chain is on the extracellular side; sequence DVLYSSSGTLHCPDQPSSWVGCK. A disulfide bridge links cysteine 202 with cysteine 271. A helical transmembrane segment spans residues 204–228; it reads LSLVFLQYCIMANFFWLLVEGLYLH. At 229–239 the chain is on the cytoplasmic side; that stretch reads TLLVAMLPPRR. Residues 240–261 traverse the membrane as a helical segment; it reads CFLAYLLIGWGLPTVCIGAWTA. Residues 262-280 are Extracellular-facing; it reads ARLYLEDTGCWDTNDHSVP. A helical transmembrane segment spans residues 281-304; it reads WWVIRIPILISIIVNFVLFISIIR. Residues 305 to 325 lie on the Cytoplasmic side of the membrane; the sequence is ILLQKLTSPDVGGNDQSQYKR. A helical membrane pass occupies residues 326–346; sequence LAKSTLLLIPLFGVHYMVFAV. The Extracellular portion of the chain corresponds to 347-354; that stretch reads FPISISSK. Residues 355-378 form a helical membrane-spanning segment; it reads YQILFELCLGSFQGLVVAVLYCFL. The Cytoplasmic segment spans residues 379–438; the sequence is NSEVQCELKRKWRSRCPTPSASRDYRVCGSSFSRNGSEGALQFHRGSRAQSFLQTETSVI.

The protein belongs to the G-protein coupled receptor 2 family. In terms of assembly, interacts with ADCYAP1/PACAP (via N-terminal extracellular domain); activated by PACAP27 and CAPAC38 neuropeptides. Interacts with VIP; the interaction results in VIPR1 activation. In terms of tissue distribution, expressed in CD4+ T-cells, but not in CD8+ T-cells. Expressed in the T-cell lines Jurkat, Peer, MOLT-4, HSB, YT and SUP-T1, but not in the T-cell lines HARRIS and HuT 78.

The protein resides in the cell membrane. Its function is as follows. G protein-coupled receptor activated by the neuropeptides vasoactive intestinal peptide (VIP) and pituitary adenylate cyclase-activating polypeptide (ADCYAP1/PACAP). Binds VIP and both PACAP27 and PACAP38 bioactive peptides with the following order of potency PACAP38 = VIP &gt; PACAP27. Ligand binding causes a conformation change that triggers signaling via guanine nucleotide-binding proteins (G proteins) and modulates the activity of downstream effectors. Activates cAMP-dependent pathway. May be coupled to phospholipase C. The chain is Vasoactive intestinal polypeptide receptor 2 from Homo sapiens (Human).